Consider the following 340-residue polypeptide: Holliday junction branch migration complex subunit RuvB (340 aa).

A large ATPase domain (RuvB-L) region spans residues 4–184 (TDRIVGGQSL…FGIVQRLEFY (181 aa)). ATP-binding positions include R24, G65, K68, T69, T70, 131–133 (EDF), R174, Y184, and R221. T69 provides a ligand contact to Mg(2+). Residues 185 to 255 (SIEELAQIVT…IADLALNLLE (71 aa)) form a small ATPAse domain (RuvB-S) region. Positions 258-340 (PLGLDKMDRR…TMPERNLEDE (83 aa)) are head domain (RuvB-H). DNA contacts are provided by R294, R313, and R318.

The protein belongs to the RuvB family. Homohexamer. Forms an RuvA(8)-RuvB(12)-Holliday junction (HJ) complex. HJ DNA is sandwiched between 2 RuvA tetramers; dsDNA enters through RuvA and exits via RuvB. An RuvB hexamer assembles on each DNA strand where it exits the tetramer. Each RuvB hexamer is contacted by two RuvA subunits (via domain III) on 2 adjacent RuvB subunits; this complex drives branch migration. In the full resolvosome a probable DNA-RuvA(4)-RuvB(12)-RuvC(2) complex forms which resolves the HJ.

The protein localises to the cytoplasm. The catalysed reaction is ATP + H2O = ADP + phosphate + H(+). Functionally, the RuvA-RuvB-RuvC complex processes Holliday junction (HJ) DNA during genetic recombination and DNA repair, while the RuvA-RuvB complex plays an important role in the rescue of blocked DNA replication forks via replication fork reversal (RFR). RuvA specifically binds to HJ cruciform DNA, conferring on it an open structure. The RuvB hexamer acts as an ATP-dependent pump, pulling dsDNA into and through the RuvAB complex. RuvB forms 2 homohexamers on either side of HJ DNA bound by 1 or 2 RuvA tetramers; 4 subunits per hexamer contact DNA at a time. Coordinated motions by a converter formed by DNA-disengaged RuvB subunits stimulates ATP hydrolysis and nucleotide exchange. Immobilization of the converter enables RuvB to convert the ATP-contained energy into a lever motion, pulling 2 nucleotides of DNA out of the RuvA tetramer per ATP hydrolyzed, thus driving DNA branch migration. The RuvB motors rotate together with the DNA substrate, which together with the progressing nucleotide cycle form the mechanistic basis for DNA recombination by continuous HJ branch migration. Branch migration allows RuvC to scan DNA until it finds its consensus sequence, where it cleaves and resolves cruciform DNA. The chain is Holliday junction branch migration complex subunit RuvB from Hydrogenovibrio crunogenus (strain DSM 25203 / XCL-2) (Thiomicrospira crunogena).